We begin with the raw amino-acid sequence, 394 residues long: UDP-glucose 6-dehydrogenase (394 aa).

NAD(+) is bound by residues 2–19, Val-11, Asp-29, Lys-34, Thr-83, Thr-118, and Glu-145; that span reads KIAIAGSGYVGLSLAVLL. Substrate is bound by residues 141–145, Lys-203, Asn-207, 248–252, and Gly-256; these read EFLRE and YNNPS. An NAD(+)-binding site is contributed by Tyr-258. Cys-259 acts as the Nucleophile in catalysis. Lys-262 serves as a coordination point for NAD(+). Lys-313 contacts substrate. Residue Arg-320 participates in NAD(+) binding.

It belongs to the UDP-glucose/GDP-mannose dehydrogenase family.

It catalyses the reaction UDP-alpha-D-glucose + 2 NAD(+) + H2O = UDP-alpha-D-glucuronate + 2 NADH + 3 H(+). It functions in the pathway nucleotide-sugar biosynthesis; UDP-alpha-D-glucuronate biosynthesis; UDP-alpha-D-glucuronate from UDP-alpha-D-glucose: step 1/1. Catalyzes the formation of UDP-glucuronic acid which is required for capsular hyaluronic acid synthesis. Directly responsible for the transformation of some unencapsulated serotype-3 SP mutants to the encapsulated phenotype. The sequence is that of UDP-glucose 6-dehydrogenase (cap3A) from Streptococcus pneumoniae.